Reading from the N-terminus, the 180-residue chain is tRNA-splicing endonuclease (180 aa).

Residues Y117, H125, and K156 contribute to the active site.

Belongs to the tRNA-intron endonuclease family. Archaeal short subfamily. In terms of assembly, homotetramer; although the tetramer contains four active sites, only two participate in the cleavage. Therefore, it should be considered as a dimer of dimers.

The catalysed reaction is pretRNA = a 3'-half-tRNA molecule with a 5'-OH end + a 5'-half-tRNA molecule with a 2',3'-cyclic phosphate end + an intron with a 2',3'-cyclic phosphate and a 5'-hydroxyl terminus.. Endonuclease that removes tRNA introns. Cleaves pre-tRNA at the 5'- and 3'-splice sites to release the intron. The products are an intron and two tRNA half-molecules bearing 2',3' cyclic phosphate and 5'-OH termini. Recognizes a pseudosymmetric substrate in which 2 bulged loops of 3 bases are separated by a stem of 4 bp. In Sulfurisphaera tokodaii (strain DSM 16993 / JCM 10545 / NBRC 100140 / 7) (Sulfolobus tokodaii), this protein is tRNA-splicing endonuclease.